We begin with the raw amino-acid sequence, 493 residues long: ATP synthase subunit beta, chloroplastic (493 aa).

ATP is bound at residue 170-177 (GGAGVGKT).

This sequence belongs to the ATPase alpha/beta chains family. F-type ATPases have 2 components, CF(1) - the catalytic core - and CF(0) - the membrane proton channel. CF(1) has five subunits: alpha(3), beta(3), gamma(1), delta(1), epsilon(1). CF(0) has four main subunits: a(1), b(1), b'(1) and c(9-12).

It is found in the plastid. The protein localises to the chloroplast thylakoid membrane. It catalyses the reaction ATP + H2O + 4 H(+)(in) = ADP + phosphate + 5 H(+)(out). Produces ATP from ADP in the presence of a proton gradient across the membrane. The catalytic sites are hosted primarily by the beta subunits. The protein is ATP synthase subunit beta, chloroplastic of Adiantum capillus-veneris (Maidenhair fern).